A 306-amino-acid chain; its full sequence is Lipoyl synthase (306 aa).

[4Fe-4S] cluster-binding residues include C55, C60, C66, C81, C85, C88, and S294. The region spanning 67 to 283 (WNHRTATFLL…RSYALARGFT (217 aa)) is the Radical SAM core domain.

Belongs to the radical SAM superfamily. Lipoyl synthase family. [4Fe-4S] cluster is required as a cofactor.

It is found in the cytoplasm. It catalyses the reaction [[Fe-S] cluster scaffold protein carrying a second [4Fe-4S](2+) cluster] + N(6)-octanoyl-L-lysyl-[protein] + 2 oxidized [2Fe-2S]-[ferredoxin] + 2 S-adenosyl-L-methionine + 4 H(+) = [[Fe-S] cluster scaffold protein] + N(6)-[(R)-dihydrolipoyl]-L-lysyl-[protein] + 4 Fe(3+) + 2 hydrogen sulfide + 2 5'-deoxyadenosine + 2 L-methionine + 2 reduced [2Fe-2S]-[ferredoxin]. It participates in protein modification; protein lipoylation via endogenous pathway; protein N(6)-(lipoyl)lysine from octanoyl-[acyl-carrier-protein]: step 2/2. In terms of biological role, catalyzes the radical-mediated insertion of two sulfur atoms into the C-6 and C-8 positions of the octanoyl moiety bound to the lipoyl domains of lipoate-dependent enzymes, thereby converting the octanoylated domains into lipoylated derivatives. The protein is Lipoyl synthase of Chloroflexus aurantiacus (strain ATCC 29364 / DSM 637 / Y-400-fl).